The sequence spans 402 residues: Protein kinase US3 homolog (402 aa).

Disordered stretches follow at residues 1–21 (MSSS…KVHD) and 46–88 (FPDS…SPET). One can recognise a Protein kinase domain in the interval 102 to 386 (YNIVSSLSPG…AQDILMLPLF (285 aa)). ATP-binding positions include 108 to 116 (LSPGSEGYI) and lysine 129. Residue aspartate 218 is the Proton acceptor of the active site.

Belongs to the protein kinase superfamily. Ser/Thr protein kinase family. Phosphorylated by UL13 homolog; this phosphorylation regulates subsequent phosphorylation of UL31 and UL34 homologs by US3. Autophosphorylated.

The protein resides in the host cytoplasm. It is found in the host nucleus. The catalysed reaction is L-seryl-[protein] + ATP = O-phospho-L-seryl-[protein] + ADP + H(+). It catalyses the reaction L-threonyl-[protein] + ATP = O-phospho-L-threonyl-[protein] + ADP + H(+). Multifunctional serine/threonine kinase that plays a role in several processes including egress of virus particles from the nucleus, modulation of the actin cytoskeleton and inhibition of apoptosis. Phosphorylates UL31 and UL34 homologs, two critical regulators of capsid budding from nucleus to endoplasmic reticulum, thereby facilitating virion egress. Modulates and redistributes host components of the nuclear envelope, including LMNA, emerin/EMD and the nuclear matrix protein MATR3. Phosphorylates envelope glycoprotein B (gB), probably to direct it to the cell surface. Promotes virus intracellular spread by restructuring host cell cytoskeleton. Blocks host apoptosis to extend cell survival and allow efficient viral replication. Promotes viral gene expression by phosphorylating host HDAC2 to reduce viral genome silencing. This Gallus gallus (Chicken) protein is Protein kinase US3 homolog (MDV092).